We begin with the raw amino-acid sequence, 420 residues long: Putative FBD-associated F-box protein At1g78730 (420 aa).

An F-box domain is found at 21–71 (LDWLRKLPDSLLCQVFLNLPTKDVVKTSVLSSTWGNIWRSVPGLDLGYGDF). The FBD domain maps to 341 to 390 (ISILPGPQCNLPALEFVDILKPMVEKETELKLMSYFLEKSTILKKLTLRL).

The chain is Putative FBD-associated F-box protein At1g78730 from Arabidopsis thaliana (Mouse-ear cress).